A 416-amino-acid polypeptide reads, in one-letter code: MTMIKIAQQAKQASFELAQFGNVQKNQALFSIADALEQRTEEILVVNAKDIDYAKSQGISEAIIDRLLLTPERIRGIANDVRNVASLADPVGQVIDGGVLDSGLKIERQRVPLGVILTIYEARPNVTIDVASLCLKTGNAVILRGGKETKFTNAILVEVVQSALEQAGLPKLAVQAVTDPDRALLLELLKLDQFIDMVIPRGGAGLHQFCKENSTIPVIVGGIGVCHLYVEASADLERSLNVIANAKTQRPSTCNTLETLLVDKAIADQFLPKLAEHLCKLKVTLHSDDFSEDLQKNPQIQPLEQAKLRQEWLSLDLSVVVVDGIQQAIEHIRTYGSQHSEGILTSNYALARQFVQQVDAAAVYINASTRFTDGAQFGLGAEVAVSTQKLHARGPMGLEALTTYKWVCEGDYLTRK.

Belongs to the gamma-glutamyl phosphate reductase family.

It is found in the cytoplasm. It carries out the reaction L-glutamate 5-semialdehyde + phosphate + NADP(+) = L-glutamyl 5-phosphate + NADPH + H(+). It participates in amino-acid biosynthesis; L-proline biosynthesis; L-glutamate 5-semialdehyde from L-glutamate: step 2/2. Catalyzes the NADPH-dependent reduction of L-glutamate 5-phosphate into L-glutamate 5-semialdehyde and phosphate. The product spontaneously undergoes cyclization to form 1-pyrroline-5-carboxylate. In Glaesserella parasuis serovar 5 (strain SH0165) (Haemophilus parasuis), this protein is Gamma-glutamyl phosphate reductase.